A 438-amino-acid chain; its full sequence is Thymidine phosphorylase (438 aa).

This sequence belongs to the thymidine/pyrimidine-nucleoside phosphorylase family. Homodimer.

It carries out the reaction thymidine + phosphate = 2-deoxy-alpha-D-ribose 1-phosphate + thymine. The protein operates within pyrimidine metabolism; dTMP biosynthesis via salvage pathway; dTMP from thymine: step 1/2. The enzymes which catalyze the reversible phosphorolysis of pyrimidine nucleosides are involved in the degradation of these compounds and in their utilization as carbon and energy sources, or in the rescue of pyrimidine bases for nucleotide synthesis. The sequence is that of Thymidine phosphorylase from Colwellia psychrerythraea (strain 34H / ATCC BAA-681) (Vibrio psychroerythus).